The primary structure comprises 664 residues: Probable 3',5'-cyclic phosphodiesterase pde-1 (664 aa).

2 disordered regions span residues 24 to 60 and 113 to 142; these read TSSA…SIKI and RNQK…KSYD. Basic and acidic residues-rich tracts occupy residues 28–38 and 114–130; these read SEEHGDSDKKL and NQKE…EKEP. The 379-residue stretch at 256–634 folds into the PDEase domain; that stretch reads VQCPIPPEIA…AHWKERAAKE (379 aa). His333 serves as the catalytic Proton donor. 4 residues coordinate a divalent metal cation: His337, His373, Asp374, and Asp480. Disordered stretches follow at residues 564 to 597 and 630 to 664; these read DSLF…TSPS and RAAK…VTTN. Over residues 630–644 the composition is skewed to basic and acidic residues; it reads RAAKEEEERKIKEAA.

It belongs to the cyclic nucleotide phosphodiesterase family. In terms of assembly, interacts with cmd-1 in the presence of Ca(2+). A divalent metal cation is required as a cofactor. Expressed in AFD thermosensory neurons.

It catalyses the reaction a nucleoside 3',5'-cyclic phosphate + H2O = a nucleoside 5'-phosphate + H(+). In terms of biological role, redundantly with pde-5, plays a role in the AFD thermosensory neurons to regulate microvilli receptive ending morphology, possibly by regulating cGMP levels. The sequence is that of Probable 3',5'-cyclic phosphodiesterase pde-1 (pde-1) from Caenorhabditis elegans.